We begin with the raw amino-acid sequence, 80 residues long: Serine palmitoyltransferase small subunit B (80 aa).

Residues methionine 1–serine 11 are Cytoplasmic-facing. A helical transmembrane segment spans residues tryptophan 12–tryptophan 29. Over glutamate 30–threonine 36 the chain is Lumenal. A helical membrane pass occupies residues leucine 37–valine 57. At arginine 58–serine 80 the chain is on the cytoplasmic side.

The protein belongs to the SPTSS family. SPTSSB subfamily. In terms of assembly, component of the serine palmitoyltransferase (SPT) complex, which is composed of SPTLC1, SPTLC2 or SPTLC3 and SPTSSA or SPTSSB. The heterodimer consisting of SPTLC1 and SPTLC2/SPTLC3 forms the catalytic core of the enzyme, while SPTSSA or SPTSSB subunits determine substrate specificity. SPT also interacts with ORMDL proteins, especially ORMDL3, which negatively regulate SPT activity in the presence of ceramides.

Its subcellular location is the endoplasmic reticulum membrane. Its pathway is lipid metabolism; sphingolipid metabolism. In terms of biological role, component of the serine palmitoyltransferase multisubunit enzyme (SPT) that catalyzes the initial and rate-limiting step in sphingolipid biosynthesis by condensing L-serine and activated acyl-CoA (most commonly palmitoyl-CoA) to form long-chain bases. The SPT complex is composed of SPTLC1, SPTLC2 or SPTLC3 and SPTSSA or SPTSSB. Within this complex, the heterodimer consisting of SPTLC1 and SPTLC2/SPTLC3 forms the catalytic core. Within the SPT complex, SPTSSB stimulates the catalytic activity and plays a role in substrate specificity. SPT complexes with this subunit showing a preference for longer acyl-CoAs. The SPTLC1-SPTLC2-SPTSSB complex shows a strong preference for C18-CoA substrate, while the SPTLC1-SPTLC3-SPTSSB isozyme displays an ability to use a broader range of acyl-CoAs, without apparent preference. This chain is Serine palmitoyltransferase small subunit B (sptssb), found in Xenopus laevis (African clawed frog).